The chain runs to 230 residues: Ion-translocating oxidoreductase complex subunit E (230 aa).

The next 6 membrane-spanning stretches (helical) occupy residues 18–38, 39–59, 69–89, 93–113, 124–144, and 182–202; these read ALVQLLGLCPLLAVSSTITNA, LGLGIATLLVLVGSNVTVSLI, IPVFVMIIASLVTCVQLLMNA, GLYLSLGIFIPLIVTNCIIIG, VLPAALDGLWMGLGMTSVLVV, and SFLLALLPPGAFIGVGLLIAL.

Belongs to the NqrDE/RnfAE family. In terms of assembly, the complex is composed of six subunits: RnfA, RnfB, RnfC, RnfD, RnfE and RnfG.

Its subcellular location is the cell inner membrane. Its function is as follows. Part of a membrane-bound complex that couples electron transfer with translocation of ions across the membrane. This is Ion-translocating oxidoreductase complex subunit E from Vibrio parahaemolyticus serotype O3:K6 (strain RIMD 2210633).